Reading from the N-terminus, the 402-residue chain is Argininosuccinate synthase (402 aa).

9 to 17 contributes to the ATP binding site; sequence AYSGGLDTS. Tyrosine 87 contacts L-citrulline. ATP is bound at residue glycine 117. The L-aspartate site is built by threonine 119, asparagine 123, and aspartate 124. Residue asparagine 123 coordinates L-citrulline. Arginine 127, serine 176, serine 185, glutamate 261, and tyrosine 273 together coordinate L-citrulline.

Belongs to the argininosuccinate synthase family. Type 1 subfamily. In terms of assembly, homotetramer.

Its subcellular location is the cytoplasm. It carries out the reaction L-citrulline + L-aspartate + ATP = 2-(N(omega)-L-arginino)succinate + AMP + diphosphate + H(+). It functions in the pathway amino-acid biosynthesis; L-arginine biosynthesis; L-arginine from L-ornithine and carbamoyl phosphate: step 2/3. This chain is Argininosuccinate synthase, found in Chlorobium phaeobacteroides (strain BS1).